The primary structure comprises 393 residues: Lysine/ornithine decarboxylase (393 aa).

Lys51 is subject to N6-(pyridoxal phosphate)lysine. The active-site Proton donor; shared with dimeric partner is Cys323.

The protein belongs to the Orn/Lys/Arg decarboxylase class-II family. Homodimer. Pyridoxal 5'-phosphate serves as cofactor.

The catalysed reaction is L-lysine + H(+) = cadaverine + CO2. It catalyses the reaction L-ornithine + H(+) = putrescine + CO2. It participates in amine and polyamine biosynthesis; putrescine biosynthesis via L-ornithine pathway; putrescine from L-ornithine: step 1/1. Inhibited competitively by both alpha-difluoromethyllysine and alpha-difluoromethylornithine. In terms of biological role, decarboxylates both L-lysine and L-ornithine with similar catalytic efficiency. The chain is Lysine/ornithine decarboxylase (ldc) from Selenomonas ruminantium.